Reading from the N-terminus, the 522-residue chain is Probable cytosolic Fe-S cluster assembly factor narfl (522 aa).

[4Fe-4S] cluster is bound by residues C26, C73, C76, C79, C205, C281, C439, and C443.

It belongs to the NARF family.

Its function is as follows. Component of the cytosolic iron-sulfur (Fe/S) protein assembly machinery. Required for maturation of extramitochondrial Fe/S proteins. The protein is Probable cytosolic Fe-S cluster assembly factor narfl (narfl) of Dictyostelium discoideum (Social amoeba).